The chain runs to 511 residues: 2-isopropylmalate synthase (511 aa).

The 263-residue stretch at 5–267 (LFIFDTTLRD…DTRIDATQIV (263 aa)) folds into the Pyruvate carboxyltransferase domain. 4 residues coordinate Mn(2+): Asp-14, His-202, His-204, and Asn-238. Positions 393–511 (KLLSMKVCSE…SKRERAHPQV (119 aa)) are regulatory domain.

It belongs to the alpha-IPM synthase/homocitrate synthase family. LeuA type 1 subfamily. As to quaternary structure, homodimer. Requires Mn(2+) as cofactor.

Its subcellular location is the cytoplasm. The enzyme catalyses 3-methyl-2-oxobutanoate + acetyl-CoA + H2O = (2S)-2-isopropylmalate + CoA + H(+). It participates in amino-acid biosynthesis; L-leucine biosynthesis; L-leucine from 3-methyl-2-oxobutanoate: step 1/4. Functionally, catalyzes the condensation of the acetyl group of acetyl-CoA with 3-methyl-2-oxobutanoate (2-ketoisovalerate) to form 3-carboxy-3-hydroxy-4-methylpentanoate (2-isopropylmalate). This is 2-isopropylmalate synthase from Thiobacillus denitrificans (strain ATCC 25259 / T1).